The chain runs to 236 residues: Biosynthetic peptidoglycan transglycosylase (236 aa).

A helical membrane pass occupies residues 12–31 (ALLWFVAGSIVLVLVFRWVP).

It belongs to the glycosyltransferase 51 family.

The protein localises to the cell inner membrane. The enzyme catalyses [GlcNAc-(1-&gt;4)-Mur2Ac(oyl-L-Ala-gamma-D-Glu-L-Lys-D-Ala-D-Ala)](n)-di-trans,octa-cis-undecaprenyl diphosphate + beta-D-GlcNAc-(1-&gt;4)-Mur2Ac(oyl-L-Ala-gamma-D-Glu-L-Lys-D-Ala-D-Ala)-di-trans,octa-cis-undecaprenyl diphosphate = [GlcNAc-(1-&gt;4)-Mur2Ac(oyl-L-Ala-gamma-D-Glu-L-Lys-D-Ala-D-Ala)](n+1)-di-trans,octa-cis-undecaprenyl diphosphate + di-trans,octa-cis-undecaprenyl diphosphate + H(+). It functions in the pathway cell wall biogenesis; peptidoglycan biosynthesis. Its function is as follows. Peptidoglycan polymerase that catalyzes glycan chain elongation from lipid-linked precursors. In Pseudomonas putida (strain ATCC 47054 / DSM 6125 / CFBP 8728 / NCIMB 11950 / KT2440), this protein is Biosynthetic peptidoglycan transglycosylase.